We begin with the raw amino-acid sequence, 134 residues long: Probable RNA-binding protein MJ0652 (134 aa).

The 98-residue stretch at 11 to 108 (RKLTGKMKRM…REGWKKYLAK (98 aa)) folds into the CRM domain.

The sequence is that of Probable RNA-binding protein MJ0652 from Methanocaldococcus jannaschii (strain ATCC 43067 / DSM 2661 / JAL-1 / JCM 10045 / NBRC 100440) (Methanococcus jannaschii).